The sequence spans 277 residues: SF-assemblin (277 aa).

Residues 1–20 (MATSGMVSPTSGRPFSPMRS) are disordered. Residues 1–27 (MATSGMVSPTSGRPFSPMRSSVLTTTG) are nonhelical region. Positions 28–277 (SAIKLEHVSE…KMVNMQHNSA (250 aa)) are rod. Residues 70 to 90 (RLEKSMEAEVKRRAESDKQLQ) are a coiled coil.

It belongs to the SF-assemblin family. Post-translationally, the N-terminus is blocked.

It is found in the cytoplasm. The protein resides in the cytoskeleton. Its function is as follows. Major component of the striated microtubule-associated fibers (SMAFs; system-I-fibers). In Dunaliella bioculata (Green alga), this protein is SF-assemblin.